Reading from the N-terminus, the 137-residue chain is Proofreading thioesterase EntH (137 aa).

Glu63 functions as the Nucleophile or proton acceptor in the catalytic mechanism.

This sequence belongs to the thioesterase PaaI family. In terms of assembly, homotetramer. Dimer of dimers. Interacts specifically with the aryl carrier protein (ArCP) domain of EntB.

It is found in the cytoplasm. Its pathway is siderophore biosynthesis; enterobactin biosynthesis. Required for optimal enterobactin synthesis. Acts as a proofreading enzyme that prevents EntB misacylation by hydrolyzing the thioester bound existing between EntB and wrongly charged molecules. This Citrobacter koseri (strain ATCC BAA-895 / CDC 4225-83 / SGSC4696) protein is Proofreading thioesterase EntH.